Here is a 113-residue protein sequence, read N- to C-terminus: Translation initiation factor IF-1, chloroplastic (113 aa).

An S1-like domain is found at 8–83; the sequence is REKKNPREAK…SKGRIIYRLP (76 aa). Residues 86–113 form a disordered region; that stretch reads DSKRIEDSKDSEDLKDSEDLKDTKDSKD.

This sequence belongs to the IF-1 family. As to quaternary structure, component of the 30S ribosomal translation pre-initiation complex which assembles on the 30S ribosome in the order IF-2 and IF-3, IF-1 and N-formylmethionyl-tRNA(fMet); mRNA recruitment can occur at any time during PIC assembly.

The protein resides in the plastid. Its subcellular location is the chloroplast. Functionally, one of the essential components for the initiation of protein synthesis. Stabilizes the binding of IF-2 and IF-3 on the 30S subunit to which N-formylmethionyl-tRNA(fMet) subsequently binds. Helps modulate mRNA selection, yielding the 30S pre-initiation complex (PIC). Upon addition of the 50S ribosomal subunit IF-1, IF-2 and IF-3 are released leaving the mature 70S translation initiation complex. The chain is Translation initiation factor IF-1, chloroplastic from Hordeum vulgare (Barley).